A 310-amino-acid chain; its full sequence is Putative S-adenosyl-L-methionine-dependent methyltransferase MAB_4587c (310 aa).

S-adenosyl-L-methionine contacts are provided by residues Asp126 and 155 to 156 (DL).

Belongs to the UPF0677 family.

In terms of biological role, exhibits S-adenosyl-L-methionine-dependent methyltransferase activity. This Mycobacteroides abscessus (strain ATCC 19977 / DSM 44196 / CCUG 20993 / CIP 104536 / JCM 13569 / NCTC 13031 / TMC 1543 / L948) (Mycobacterium abscessus) protein is Putative S-adenosyl-L-methionine-dependent methyltransferase MAB_4587c.